Here is a 390-residue protein sequence, read N- to C-terminus: Type II methyltransferase M.SacI (390 aa).

The SAM-dependent MTase C5-type domain maps to 5 to 371; sequence LPVISLFSGA…RALMEQLGYL (367 aa). Residue Cys96 is part of the active site.

The protein belongs to the class I-like SAM-binding methyltransferase superfamily. C5-methyltransferase family.

It carries out the reaction a 2'-deoxycytidine in DNA + S-adenosyl-L-methionine = a 5-methyl-2'-deoxycytidine in DNA + S-adenosyl-L-homocysteine + H(+). In terms of biological role, a beta methylase recognizes the double-stranded sequence 5'-GAGCTC-3', methylates C-4 on both strands, and protects the DNA from cleavage by the SacI endonuclease. This chain is Type II methyltransferase M.SacI, found in Streptomyces achromogenes.